A 378-amino-acid chain; its full sequence is Ribosomal RNA large subunit methyltransferase G (378 aa).

The protein belongs to the methyltransferase superfamily. RlmG family.

The protein resides in the cytoplasm. It carries out the reaction guanosine(1835) in 23S rRNA + S-adenosyl-L-methionine = N(2)-methylguanosine(1835) in 23S rRNA + S-adenosyl-L-homocysteine + H(+). In terms of biological role, specifically methylates the guanine in position 1835 (m2G1835) of 23S rRNA. The protein is Ribosomal RNA large subunit methyltransferase G of Salmonella newport (strain SL254).